The following is a 347-amino-acid chain: MKIYYDEDANIEIIKGMNVSIIGYGSQGNAHANNLHESGVSVTVGLREGSSSWAKAEEAGLKVQTVADSVIQADLVMILAPDEFQKNIYETEIKPNLKTSAILAFAHGFNIHFEKIVPEATNSVIMIAPKGPGHTVRSTYTNGGGVPSLIAIYEDALSDEDYSAKDVALSYAKANGGTRAGVLETSFKEETETDLFGEQAVLCGGLTALIKAGFETLVEAGYSEEMAYFECLHETKLITDLIQEGGIANMHYSISNTAEYGDYVSGPKVITSDTKKAMKGILENIQSGKFADDFLNDCRQSNDGTGGPVMKSNREATKIHPIESVGAELRSKMKFLNSQKLVDKEIN.

The region spanning 1–185 (MKIYYDEDAN…GGTRAGVLET (185 aa)) is the KARI N-terminal Rossmann domain. Residues 24–27 (YGSQ), Arg-47, Ser-50, Ser-52, and 82–85 (DEFQ) each bind NADP(+). His-107 is an active-site residue. Gly-133 is an NADP(+) binding site. Positions 186–336 (SFKEETETDL…AELRSKMKFL (151 aa)) constitute a KARI C-terminal knotted domain. Mg(2+) is bound by residues Asp-194, Glu-198, Glu-230, and Glu-234. Ser-255 serves as a coordination point for substrate.

The protein belongs to the ketol-acid reductoisomerase family. The cofactor is Mg(2+).

It catalyses the reaction (2R)-2,3-dihydroxy-3-methylbutanoate + NADP(+) = (2S)-2-acetolactate + NADPH + H(+). It carries out the reaction (2R,3R)-2,3-dihydroxy-3-methylpentanoate + NADP(+) = (S)-2-ethyl-2-hydroxy-3-oxobutanoate + NADPH + H(+). Its pathway is amino-acid biosynthesis; L-isoleucine biosynthesis; L-isoleucine from 2-oxobutanoate: step 2/4. It participates in amino-acid biosynthesis; L-valine biosynthesis; L-valine from pyruvate: step 2/4. Involved in the biosynthesis of branched-chain amino acids (BCAA). Catalyzes an alkyl-migration followed by a ketol-acid reduction of (S)-2-acetolactate (S2AL) to yield (R)-2,3-dihydroxy-isovalerate. In the isomerase reaction, S2AL is rearranged via a Mg-dependent methyl migration to produce 3-hydroxy-3-methyl-2-ketobutyrate (HMKB). In the reductase reaction, this 2-ketoacid undergoes a metal-dependent reduction by NADPH to yield (R)-2,3-dihydroxy-isovalerate. The protein is Ketol-acid reductoisomerase (NADP(+)) of Gamma-proteobacterium EBAC31A08.